We begin with the raw amino-acid sequence, 271 residues long: tRNA pseudouridine synthase A (271 aa).

D54 acts as the Nucleophile in catalysis. Y112 contacts substrate.

This sequence belongs to the tRNA pseudouridine synthase TruA family. As to quaternary structure, homodimer.

The enzyme catalyses uridine(38/39/40) in tRNA = pseudouridine(38/39/40) in tRNA. Formation of pseudouridine at positions 38, 39 and 40 in the anticodon stem and loop of transfer RNAs. The sequence is that of tRNA pseudouridine synthase A from Acinetobacter baylyi (strain ATCC 33305 / BD413 / ADP1).